A 475-amino-acid chain; its full sequence is Putative F-box protein At3g58960 (475 aa).

The region spanning 1-49 (MDRISSLSNDIISNIVSFLSAKDAAVASVLSKRWQNIYTIVPNLEFDNT) is the F-box domain.

The polypeptide is Putative F-box protein At3g58960 (Arabidopsis thaliana (Mouse-ear cress)).